The following is a 300-amino-acid chain: Ribosomal protein bS6--L-glutamate ligase (300 aa).

One can recognise an ATP-grasp domain in the interval 104–287 (MQLLARQGID…IASKMIRWIE (184 aa)). Residues Lys-141, 178-179 (EY), Asp-187, and 211-213 (RSN) contribute to the ATP site. Mg(2+) contacts are provided by Asp-248, Glu-260, and Asn-262. Residues Asp-248, Glu-260, and Asn-262 each coordinate Mn(2+).

Belongs to the RimK family. Mg(2+) is required as a cofactor. It depends on Mn(2+) as a cofactor.

Its function is as follows. An L-glutamate ligase that catalyzes the ATP-dependent post-translational addition of glutamate residues to the C-terminus of ribosomal protein bS6 (RpsF). Is also able to catalyze the synthesis of poly-alpha-glutamate in vitro, via ATP hydrolysis from unprotected glutamate as substrate. The number of glutamate residues added to either RpsF or to poly-alpha-glutamate changes with pH. In Escherichia coli O81 (strain ED1a), this protein is Ribosomal protein bS6--L-glutamate ligase.